Consider the following 612-residue polypeptide: U-box domain-containing protein 11 (612 aa).

Residues 127–196 (DEVGEQVELA…LHFGEEEEKQ (70 aa)) are a coiled coil. The U-box domain occupies 240–314 (TIPVDFLCPV…SRWCAEHNIE (75 aa)). ARM repeat units lie at residues 363-402 (TDNR…NLSI), 404-443 (ENNK…SLSL), 445-484 (DENK…NLCI), 486-526 (HGNK…VLAN), and 528-567 (QDAK…SLCK).

It carries out the reaction S-ubiquitinyl-[E2 ubiquitin-conjugating enzyme]-L-cysteine + [acceptor protein]-L-lysine = [E2 ubiquitin-conjugating enzyme]-L-cysteine + N(6)-ubiquitinyl-[acceptor protein]-L-lysine.. Its pathway is protein modification; protein ubiquitination. Functionally, functions as an E3 ubiquitin ligase. This is U-box domain-containing protein 11 (PUB11) from Arabidopsis thaliana (Mouse-ear cress).